A 2095-amino-acid chain; its full sequence is Oxygen-regulated protein 1 (2095 aa).

2 consecutive Doublecortin domains span residues 35–117 (KRIS…VDLD) and 157–236 (RRLV…GNYD). 5 disordered regions span residues 358–379 (GLSNNDEKNKKSSYPGKTDYGP), 643–688 (ENRK…GKIP), 863–887 (GAEVSEQHVTTRADPLASLKKPDFP), 1400–1430 (NKKKSISSDKEESRTSEEPRSITNSMTSSER), and 1572–1595 (SGYPCKASSNSHNDDSGQEKEPTR). Over residues 1405–1419 (ISSDKEESRTSEEPR) the composition is skewed to basic and acidic residues. The span at 1420–1430 (SITNSMTSSER) shows a compositional bias: polar residues. Over residues 1583 to 1595 (HNDDSGQEKEPTR) the composition is skewed to basic and acidic residues.

As to quaternary structure, interacts (via the doublecortin domains) with microtubules. Interacts with RP1L1. Interacts with MAK. Expressed in the cell bodies and inner segments of photoreceptors. Not found in liver, spleen, kidney, brain, thymus, muscle, heart, lung and testis.

The protein localises to the cytoplasm. Its subcellular location is the cytoskeleton. It is found in the cilium axoneme. It localises to the cell projection. The protein resides in the cilium. The protein localises to the photoreceptor outer segment. Its function is as follows. Microtubule-associated protein regulating the stability and length of the microtubule-based axoneme of photoreceptors. Required for the differentiation of photoreceptor cells, it plays a role in the organization of the outer segment of rod and cone photoreceptors ensuring the correct orientation and higher-order stacking of outer segment disks along the photoreceptor axoneme. The sequence is that of Oxygen-regulated protein 1 (Rp1) from Mus musculus (Mouse).